Consider the following 347-residue polypeptide: N-acetyl-gamma-glutamyl-phosphate reductase (347 aa).

C155 is an active-site residue.

The protein belongs to the NAGSA dehydrogenase family. Type 1 subfamily.

It is found in the cytoplasm. The catalysed reaction is N-acetyl-L-glutamate 5-semialdehyde + phosphate + NADP(+) = N-acetyl-L-glutamyl 5-phosphate + NADPH + H(+). Its pathway is amino-acid biosynthesis; L-arginine biosynthesis; N(2)-acetyl-L-ornithine from L-glutamate: step 3/4. In terms of biological role, catalyzes the NADPH-dependent reduction of N-acetyl-5-glutamyl phosphate to yield N-acetyl-L-glutamate 5-semialdehyde. The protein is N-acetyl-gamma-glutamyl-phosphate reductase of Akkermansia muciniphila (strain ATCC BAA-835 / DSM 22959 / JCM 33894 / BCRC 81048 / CCUG 64013 / CIP 107961 / Muc).